We begin with the raw amino-acid sequence, 299 residues long: tRNA pseudouridine synthase B (299 aa).

The active-site Nucleophile is D47.

This sequence belongs to the pseudouridine synthase TruB family. Type 1 subfamily.

The enzyme catalyses uridine(55) in tRNA = pseudouridine(55) in tRNA. Functionally, responsible for synthesis of pseudouridine from uracil-55 in the psi GC loop of transfer RNAs. This chain is tRNA pseudouridine synthase B, found in Dechloromonas aromatica (strain RCB).